Consider the following 408-residue polypeptide: Glutamate N-acetyltransferase (408 aa).

Residues T150, K176, T189, E271, N403, and T408 each coordinate substrate. The active-site Nucleophile is the T189.

Belongs to the ArgJ family. As to quaternary structure, heterotetramer of two alpha and two beta chains.

The protein resides in the cytoplasm. The enzyme catalyses N(2)-acetyl-L-ornithine + L-glutamate = N-acetyl-L-glutamate + L-ornithine. It functions in the pathway amino-acid biosynthesis; L-arginine biosynthesis; L-ornithine and N-acetyl-L-glutamate from L-glutamate and N(2)-acetyl-L-ornithine (cyclic): step 1/1. Functionally, catalyzes the transfer of the acetyl group from N(2)-acetylornithine to glutamate, forming N-acetylglutamate and L-ornithine. This is Glutamate N-acetyltransferase from Methanococcus vannielii (strain ATCC 35089 / DSM 1224 / JCM 13029 / OCM 148 / SB).